A 327-amino-acid chain; its full sequence is MVVELKNIEKIYENGFHALKGVDLELKKGDILGVIGYSGAGKSTLIRLINCLERPSSGEVLVNGVNLLQLKPKELQKARQKIGMIFQHFNLLSAKNVFENVAFALEIAQWEKNKIKSRVHELLELVGLEDKMHFYPKQLSGGQKQRVAIARSLANYPNLLLCDEATSALDSKTTHSILTLLRDIQKKLDLSVVFITHEIEVVKELCNQMCVISNGKIVERGLVEEIFANPKHAVTKELIGIKNEHADKKSQNVYRIVFLGEHLDEPIISNLIRRFKIDVSIISGNIEELTTKDIGYLVVRFLGSIAETQRALEYLNALGLQVEKLKD.

The 237-residue stretch at 3 to 239 folds into the ABC transporter domain; the sequence is VELKNIEKIY…PKHAVTKELI (237 aa). 36–43 contributes to the ATP binding site; sequence GYSGAGKS.

Belongs to the ABC transporter superfamily. Methionine importer (TC 3.A.1.24) family. In terms of assembly, the complex is composed of two ATP-binding proteins (MetN), two transmembrane proteins (MetI) and a solute-binding protein (MetQ).

The protein resides in the cell inner membrane. It catalyses the reaction L-methionine(out) + ATP + H2O = L-methionine(in) + ADP + phosphate + H(+). The catalysed reaction is D-methionine(out) + ATP + H2O = D-methionine(in) + ADP + phosphate + H(+). Part of the ABC transporter complex MetNIQ involved in methionine import. Responsible for energy coupling to the transport system. This is Methionine import ATP-binding protein MetN from Helicobacter acinonychis (strain Sheeba).